The following is a 276-amino-acid chain: Probable ABC transporter permease protein NosY (276 aa).

A run of 6 helical transmembrane segments spans residues 20 to 40, 55 to 75, 111 to 131, 146 to 166, 179 to 199, and 251 to 271; these read WLLAISLLFAVLAVGIAWLGA, IASLASLATFLMPLIALLLAY, ILALAVLIGFGCAALAIALLV, FMISSTLLGWVFLAFAYVLSG, LGVWFLFVLVFDLVLLALLVL, and VLWLCLLAWIGVSLLLAYAIF.

In terms of assembly, the complex may be composed of an ATP-binding protein (NosF), a transmembrane protein (NosY) and a solute-binding protein (NosD).

The protein localises to the cell inner membrane. Required for the assembly of the copper chromophores of nitrous oxide reductase. Could be part of the ABC transporter complex NosDFY. The sequence is that of Probable ABC transporter permease protein NosY from Stutzerimonas stutzeri (Pseudomonas stutzeri).